A 698-amino-acid chain; its full sequence is Inner centromere protein SLI15 (698 aa).

Phosphoserine is present on serine 268. Disordered stretches follow at residues 365–390 (KNKITKNNSPKGKNSRKSSIPRFDKT), 405–444 (EQKKKSKHSSDVHKTGSRPHSISPTKISVDSSSPSKEVKN), and 455–474 (RPTKASISPNKNKNLTTSQT). Composition is skewed to polar residues over residues 422–439 (RPHSISPTKISVDSSSPS) and 459–474 (ASISPNKNKNLTTSQT). Serine 489 carries the phosphoserine modification. Positions 535-560 (IMRSQQEHHRRKQEKQKRMSHLEQDL) are disordered. The segment covering 550–560 (QKRMSHLEQDL) has biased composition (basic and acidic residues).

It belongs to the INCENP family. As to quaternary structure, component of the CPC complex at least composed of IPL1, BIR1 and SLI15. In terms of processing, phosphorylated by serine/threonine protein kinase IPL1.

It localises to the nucleus. Its subcellular location is the cytoplasm. The protein resides in the cytoskeleton. It is found in the spindle. The protein localises to the chromosome. It localises to the centromere. Its subcellular location is the kinetochore. In terms of biological role, component of the chromosomal passenger complex (CPC), a complex that acts as a key regulator of mitosis. Stimulates IPL1 kinase activity and facilitates its association with the mitotic spindle. Has a role in attaching the kinetochores to the microtubules and ensuring that sister kinetochores connect to opposite poles. This Saccharomyces cerevisiae (strain ATCC 204508 / S288c) (Baker's yeast) protein is Inner centromere protein SLI15 (SLI15).